A 1422-amino-acid polypeptide reads, in one-letter code: FH1/FH2 domain-containing protein 3 (1422 aa).

A GBD/FH3 domain is found at 18–411; the sequence is NSTNFPEPSR…NFGNNSYHSS (394 aa). 8 disordered regions span residues 323–464, 521–666, 687–708, 754–781, 821–849, 1262–1305, 1320–1357, and 1374–1410; these read RHED…RRRQ, ACLA…GVNG, RKSPDDEEKGDGEAGRTQQEAE, SGDLGRGSISPDAEPNDKVPETAPVQPK, LGHREAPGPPPPPPPTFLGLPPPPPPPLL, QQKQ…SYAE, SSPSVEDATPALGVRTRSRASRGSTSSWTMGTDDSPNV, and TQVPSQRVVPRERKRSRANRKSLRRTLKSGLTPEEAR. Serine 345 is subject to Phosphoserine. Residues 357–366 are compositionally biased toward basic residues; the sequence is LDRRRSRRHS. Polar residues predominate over residues 367 to 390; the sequence is VQSIKSTLSAPTSPCSQSAPSFKP. Serine 375 is modified (phosphoserine). Residues 410-430 show a composition bias toward low complexity; it reads SSRPSSGSSVPTTPTSSVSPP. A compositionally biased stretch (polar residues) spans 438 to 449; that stretch reads SSPSGLLTSSFR. The stretch at 448–480 forms a coiled coil; the sequence is FRQHQESLAAERERRRQEREERLQRIEREERNK. Basic and acidic residues predominate over residues 450–464; sequence QHQESLAAERERRRQ. Over residues 521 to 535 the composition is skewed to low complexity; that stretch reads ACLAPLSHSPSSSDS. Residues 536 to 547 are compositionally biased toward polar residues; that stretch reads QEALTVSASSPG. 2 stretches are compositionally biased toward acidic residues: residues 559–569 and 592–603; these read PEPESEAEPEA and ETEVEQALEQEP. The span at 604–624 shows a compositional bias: basic and acidic residues; that stretch reads EERASLSEKERQNEGVNERDN. Positions 626–635 are enriched in low complexity; the sequence is SASSVSSSSS. A compositionally biased stretch (basic and acidic residues) spans 637 to 651; sequence LEREEKEDKLSRDRT. Serine 763 carries the post-translational modification Phosphoserine. The residue at position 775 (threonine 775) is a Phosphothreonine. The segment covering 827 to 849 has biased composition (pro residues); sequence PGPPPPPPPTFLGLPPPPPPPLL. An FH1 domain is found at 827-858; it reads PGPPPPPPPTFLGLPPPPPPPLLDSIPPPPVP. The FH2 domain occupies 883 to 1279; that stretch reads GQPTFTKKKK…HRERNKTRGK (397 aa). Residues 1264 to 1278 are compositionally biased toward basic residues; the sequence is KQKRANHRERNKTRG. A DAD domain is found at 1359–1391; the sequence is DDAADEIMDRIVKSATQVPSQRVVPRERKRSRA. Residues 1385 to 1400 are compositionally biased toward basic residues; sequence ERKRSRANRKSLRRTL.

It belongs to the formin homology family. As to quaternary structure, interacts with nestin/NES-based interfilament (IF). Interacts with SQSTM1; isoform 4 threonine phosphorylation disrupts SQSTM1-binding. In terms of processing, phosphorylated on Thr-1474 and Thr-1476 by CK2. As to expression, expressed in the heart, kidney and brain. May be down-regulated in various types of heart diseases, including idiopathic dilated, ventricular dilated, familial dilated and perinatal dilated cardiomyopathies, as well as ischemic heart disease (at protein level).

The protein localises to the cytoplasm. It localises to the cytoskeleton. It is found in the myofibril. Its subcellular location is the sarcomere. The protein resides in the z line. In terms of biological role, actin-organizing protein that may cause stress fiber formation together with cell elongation. Isoform 4 may play a role in actin filament polymerization in cardiomyocytes. The chain is FH1/FH2 domain-containing protein 3 (FHOD3) from Homo sapiens (Human).